The sequence spans 543 residues: ATP synthase subunit alpha (543 aa).

174 to 181 (GDRQTGKT) contacts ATP.

The protein belongs to the ATPase alpha/beta chains family. In terms of assembly, F-type ATPases have 2 components, CF(1) - the catalytic core - and CF(0) - the membrane proton channel. CF(1) has five subunits: alpha(3), beta(3), gamma(1), delta(1), epsilon(1). CF(0) has three main subunits: a(1), b(2) and c(9-12). The alpha and beta chains form an alternating ring which encloses part of the gamma chain. CF(1) is attached to CF(0) by a central stalk formed by the gamma and epsilon chains, while a peripheral stalk is formed by the delta and b chains.

The protein localises to the cell membrane. It carries out the reaction ATP + H2O + 4 H(+)(in) = ADP + phosphate + 5 H(+)(out). Functionally, produces ATP from ADP in the presence of a proton gradient across the membrane. The alpha chain is a regulatory subunit. The protein is ATP synthase subunit alpha of Bifidobacterium longum subsp. infantis (strain ATCC 15697 / DSM 20088 / JCM 1222 / NCTC 11817 / S12).